Reading from the N-terminus, the 1200-residue chain is Metabotropic glycine receptor (1200 aa).

A signal peptide spans 1-24 (MGAMAYSLLFCLLLAHLGLGEVGA). Positions 25–62 (SLDPPGRPDSPRERTPRGKQHGQQLPRASAPDPSIPWS) are disordered. Over 25 to 417 (SLDPPGRPDS…CFVQEDKYLR (393 aa)) the chain is Extracellular. The interval 85-281 (YLYTGDFHQL…CENGSYKPGW (197 aa)) is cache-like region. N-linked (GlcNAc...) asparagine glycosylation is found at N98 and N143. The cysteines at positions 99 and 272 are disulfide-linked. Residues S172 and R173 each contribute to the glycine site. N215 carries N-linked (GlcNAc...) asparagine glycosylation. Positions 234-253 (LHRRGSNQGPRGLGHSWRRR) are disordered. E271 provides a ligand contact to glycine. An N-linked (GlcNAc...) asparagine glycan is attached at N274. D307 lines the glycine pocket. A glycan (N-linked (GlcNAc...) asparagine) is linked at N333. Residues 418-439 (LAIISFQALCMLLDFVSMLVVY) form a helical membrane-spanning segment. At 440–451 (HFRKAKSIRASG) the chain is on the cytoplasmic side. Residues 452 to 474 (LILLETILFGSLLLYFPVVILYF) traverse the membrane as a helical segment. Residues 475–478 (EPST) lie on the Extracellular side of the membrane. The chain crosses the membrane as a helical span at residues 479–501 (FRCILLRWARLLGFATVYGTVTL). A disulfide bridge links C481 with C573. At 502-525 (KLHRVLKVFLSRTAQRIPYMTGGR) the chain is on the cytoplasmic side. Residues 526–547 (VMRMLAVIVLVVFWFLVGWTSS) form a helical membrane-spanning segment. Residues 548–576 (MCQNLERDILLVGQGQTSDHLTFNMCLID) are Extracellular-facing. A helical membrane pass occupies residues 577–597 (RWDYMTAVAEFLFLLWGIYLC). Over 598-611 (YAVRTVPSAFHEPR) the chain is Cytoplasmic. The helical transmembrane segment at 612 to 633 (YMAVAVHNELIITAIFHTIRFV) threads the bilayer. The Extracellular portion of the chain corresponds to 634–642 (LASRLQPDW). The chain crosses the membrane as a helical span at residues 643 to 664 (MLMLYFAHAHLTVTVTIGLLLI). At 665–1200 (PKFSHSSNNP…SANKIPGPQK (536 aa)) the chain is on the cytoplasmic side. Phosphoserine occurs at positions 694, 705, and 708. Positions 757–875 (RITEIPETVS…EAESTESVPL (119 aa)) are disordered. Basic and acidic residues-rich tracts occupy residues 769 to 781 (CSKEDKEGTDHSA) and 819 to 828 (STYDHVRDQT). A Glycyl lysine isopeptide (Lys-Gly) (interchain with G-Cter in ubiquitin) cross-link involves residue K774. Low complexity predominate over residues 845–856 (ENSTLESLSSKK). S865 and S944 each carry phosphoserine. The tract at residues 947–988 (DNVETIPNSGHMEEPRKPQKSGIMKQQRVSLPTANPDVSSGI) is disordered. Residues 973–988 (QRVSLPTANPDVSSGI) show a composition bias toward polar residues. The VCPWE motif 1 signature appears at 1000–1004 (VCPWE). S1059 carries the post-translational modification Phosphoserine. The short motif at 1065-1069 (VCPWE) is the VCPWE motif 2 element. Residue S1074 is modified to Phosphoserine. The tract at residues 1130–1160 (QMGDQEKQTSSSVDIIPGSCNSSNNSHQPLT) is disordered. The VCPWE motif 3 signature appears at 1165–1169 (VCPWE). Positions 1177–1200 (NAERSVTLPASSALSANKIPGPQK) are disordered. The segment covering 1178-1191 (AERSVTLPASSALS) has biased composition (polar residues).

Belongs to the G-protein coupled receptor 3 family. As to quaternary structure, homodimer. Associates with the RGS7-GNB5 complex, promoting its localization to the cell membrane and regulating its GTPase activator activity. Interacts (via VCPWE motifs) with GNAO1. Interacts with GPC4. Interacts with EGFLAM. In terms of tissue distribution, highly expressed in brain. Expressed in several brain regions including the cerebral cortex, hippocampus, cerebellum and caudate putamen. Only expressed in neurons, and not in microglia, oligodendrocytes or astrocytes. Expressed in the visual center of the cerebral cortex. Also expressed in the eye, including photoreceptors, ganglion cells and trabecular meshwork.

The protein localises to the cell membrane. Its subcellular location is the postsynaptic cell membrane. It localises to the presynaptic cell membrane. The protein resides in the nucleus. In terms of biological role, metabotropic receptor for glycine that controls synapse formation and function in the brain. Acts as an atypical G-protein coupled receptor that recruits and regulates the RGS7-GNB5 complex instead of activating G proteins. In absence of glycine ligand, promotes the GTPase activator activity of RGS7, increasing the GTPase activity of G protein alpha subunits, thereby driving them into their inactive GDP-bound form. Glycine-binding changes the conformation of the intracellular surface, inhibiting the GTPase activator activity of the RGS7-GNB5 complex, promoting G protein alpha subunits into their active GTP-bound form and regulating cAMP levels. Also able to bind taurine, a compound closely related to glycine, but with a two-fold lower affinity. Glycine receptor-dependent regulation of cAMP controls key ion channels, kinases and neurotrophic factors involved in neuronal excitability and synaptic transmission. Plays a pivotal role in regulating mood and cognition via its ability to regulate neuronal excitability in L2/L3 pyramidal neurons of the prefrontal cortex. Also involved in spatial learning by regulating hippocampal CA1 neuronal excitability. Acts as a synaptic organizer in the hippocampus, required for proper mossy fiber-CA3 neurocircuitry establishment, structure and function: induces presynaptic differentiation in contacting axons via its interaction with GPC4. In addition to glycine, may also act as a receptor for osteocalcin (Bglap or Bglap2) hormone: osteocalcin-binding initiates a signaling response that prevents neuronal apoptosis in the hippocampus and regulates the synthesis of neurotransmitters. This chain is Metabotropic glycine receptor, found in Mus musculus (Mouse).